Reading from the N-terminus, the 131-residue chain is D-ribose pyranase (131 aa).

Residue His20 is the Proton donor of the active site. Residues Asp28, His98, and 120-122 each bind substrate; that span reads YAN.

This sequence belongs to the RbsD / FucU family. RbsD subfamily. In terms of assembly, homodecamer.

It localises to the cytoplasm. It catalyses the reaction beta-D-ribopyranose = beta-D-ribofuranose. The protein operates within carbohydrate metabolism; D-ribose degradation; D-ribose 5-phosphate from beta-D-ribopyranose: step 1/2. In terms of biological role, catalyzes the interconversion of beta-pyran and beta-furan forms of D-ribose. The sequence is that of D-ribose pyranase from Bacillus cereus (strain 03BB102).